We begin with the raw amino-acid sequence, 816 residues long: Glycerol-3-phosphate acyltransferase (816 aa).

Positions 298–303 (CHRSHM) match the HXXXXD motif motif.

This sequence belongs to the GPAT/DAPAT family.

The protein resides in the cell membrane. It carries out the reaction sn-glycerol 3-phosphate + an acyl-CoA = a 1-acyl-sn-glycero-3-phosphate + CoA. The protein operates within phospholipid metabolism; CDP-diacylglycerol biosynthesis; CDP-diacylglycerol from sn-glycerol 3-phosphate: step 1/3. The chain is Glycerol-3-phosphate acyltransferase from Hamiltonella defensa subsp. Acyrthosiphon pisum (strain 5AT).